A 1465-amino-acid polypeptide reads, in one-letter code: Vacuolar heme ABC transmembrane exporter abc3 (1465 aa).

Topologically, residues Met1–Leu8 are extracellular. A helical transmembrane segment spans residues Ser9 to Phe29. Residues Asp30 to Gln42 are Cytoplasmic-facing. The chain crosses the membrane as a helical span at residues Phe43–Val63. The Extracellular portion of the chain corresponds to Gly64–Asn69. A helical membrane pass occupies residues Ile70–Glu90. The Cytoplasmic segment spans residues Gln91 to Pro97. A helical membrane pass occupies residues Met98–Phe118. The Extracellular portion of the chain corresponds to Ser119 to Arg129. A helical membrane pass occupies residues Leu130–Pro150. Heme is bound at residue Pro151 to Cys152. Over Pro151–Ser235 the chain is Cytoplasmic. The chain crosses the membrane as a helical span at residues Leu236–Thr256. The 290-residue stretch at Val250–Glu539 folds into the ABC transmembrane type-1 1 domain. Over Lys257–Arg291 the chain is Extracellular. Residues Gly292–Gln312 traverse the membrane as a helical segment. Over Tyr313 to Lys362 the chain is Cytoplasmic. Residues Ile363–Ala383 form a helical membrane-spanning segment. Residues Leu384 to Ser394 are Extracellular-facing. The chain crosses the membrane as a helical span at residues Ala395–Val415. Residues Tyr416–Asp480 lie on the Cytoplasmic side of the membrane. Residues Phe481 to Phe501 form a helical membrane-spanning segment. Topologically, residues His502–Asp511 are extracellular. A helical membrane pass occupies residues Ile512–Thr532. Over Val533–Ser899 the chain is Cytoplasmic. An ABC transporter 1 domain is found at Leu575 to Ser804. Position 614–621 (Gly614–Ser621) interacts with ATP. Disordered regions lie at residues Glu805–Ser824 and Thr840–Asp869. A helical membrane pass occupies residues Ile900–Thr920. The ABC transmembrane type-1 2 domain maps to Ile903–Asn1189. Residues Asn921–Asn939 lie on the Extracellular side of the membrane. A helical membrane pass occupies residues Pro940 to Ile960. The Cytoplasmic portion of the chain corresponds to Ser961–Leu1033. Residues Phe1034–Phe1054 form a helical membrane-spanning segment. Over Phe1055 to Ile1465 the chain is Extracellular. One can recognise an ABC transporter 2 domain in the interval Val1226–Lys1460. Gly1260 to Ser1267 lines the ATP pocket.

The protein belongs to the ABC transporter superfamily.

The protein localises to the vacuole membrane. Iron-regulated vacuolar transporter that mobilizes stored heme from the vacuole to the cytosol in response to iron deficiency. The protein is Vacuolar heme ABC transmembrane exporter abc3 of Schizosaccharomyces pombe (strain 972 / ATCC 24843) (Fission yeast).